Reading from the N-terminus, the 154-residue chain is Nascent polypeptide-associated complex subunit beta (154 aa).

An NAC-A/B domain is found at 34–99 (EQDDTKLIEA…PQEKDVTQLI (66 aa)). The interval 125–154 (KNPELNAGGAEGAEEDIPDLIEGQKFDDVE) is disordered.

It belongs to the NAC-beta family. Part of the nascent polypeptide-associated complex (NAC), consisting of EGD2 and EGD1. NAC associates with ribosomes via EGD1.

It localises to the cytoplasm. Its subcellular location is the nucleus. Component of the nascent polypeptide-associated complex (NAC), a dynamic component of the ribosomal exit tunnel, protecting the emerging polypeptides from interaction with other cytoplasmic proteins to ensure appropriate nascent protein targeting. The NAC complex also promotes mitochondrial protein import by enhancing productive ribosome interactions with the outer mitochondrial membrane and blocks the inappropriate interaction of ribosomes translating non-secretory nascent polypeptides with translocation sites in the membrane of the endoplasmic reticulum. EGD1 may act as a transcription factor that exert a negative effect on the expression of several genes that are transcribed by RNA polymerase II. The sequence is that of Nascent polypeptide-associated complex subunit beta (EGD1) from Debaryomyces hansenii (strain ATCC 36239 / CBS 767 / BCRC 21394 / JCM 1990 / NBRC 0083 / IGC 2968) (Yeast).